Here is a 262-residue protein sequence, read N- to C-terminus: Ribose-5-phosphate isomerase A (262 aa).

Residues 33 to 36, 89 to 92, and 102 to 105 each bind substrate; these read TGST, DGAD, and KGGG. The active-site Proton acceptor is the glutamate 111. Substrate is bound at residue lysine 129.

This sequence belongs to the ribose 5-phosphate isomerase family. In terms of assembly, homodimer.

The enzyme catalyses aldehydo-D-ribose 5-phosphate = D-ribulose 5-phosphate. The protein operates within carbohydrate degradation; pentose phosphate pathway; D-ribose 5-phosphate from D-ribulose 5-phosphate (non-oxidative stage): step 1/1. Functionally, catalyzes the reversible conversion of ribose-5-phosphate to ribulose 5-phosphate. This Cereibacter sphaeroides (strain ATCC 17023 / DSM 158 / JCM 6121 / CCUG 31486 / LMG 2827 / NBRC 12203 / NCIMB 8253 / ATH 2.4.1.) (Rhodobacter sphaeroides) protein is Ribose-5-phosphate isomerase A.